The chain runs to 118 residues: Cell division protein FtsB (118 aa).

Over 1–6 (MRNWRW) the chain is Cytoplasmic. A helical transmembrane segment spans residues 7-24 (LLLVLAALLAWLQHRFWF). Residues 25-118 (GPGNSGEVRM…DLSQPRREKR (94 aa)) are Periplasmic-facing. Residues 30 to 66 (GEVRMLQVQIVQQHQENERLRQRNASLAAEVKNLKDG) are a coiled coil. Positions 98–118 (LPNDTSADHGVDLSQPRREKR) are disordered. Basic and acidic residues predominate over residues 103–118 (SADHGVDLSQPRREKR).

Belongs to the FtsB family. In terms of assembly, part of a complex composed of FtsB, FtsL and FtsQ.

It is found in the cell inner membrane. Essential cell division protein. May link together the upstream cell division proteins, which are predominantly cytoplasmic, with the downstream cell division proteins, which are predominantly periplasmic. This Xylella fastidiosa (strain M23) protein is Cell division protein FtsB.